The sequence spans 227 residues: Cytochrome c oxidase subunit 2 (227 aa).

At 1 to 14 (MAHPVQLSLQDATS) the chain is on the mitochondrial intermembrane side. The chain crosses the membrane as a helical span at residues 15–45 (PVMEELITFHDHAFMAMSLISFLVLYALLST). Residues 46–59 (LTTKLTNTSITDAQ) lie on the Mitochondrial matrix side of the membrane. Residues 60 to 87 (EMETIWTILPAIILILIALPSLRILYLT) traverse the membrane as a helical segment. The Mitochondrial intermembrane segment spans residues 88–227 (DEVNDPSFTI…IFEMGPVLTL (140 aa)). H161, C196, E198, C200, H204, and M207 together coordinate Cu cation. Mg(2+) is bound at residue E198.

Belongs to the cytochrome c oxidase subunit 2 family. As to quaternary structure, component of the cytochrome c oxidase (complex IV, CIV), a multisubunit enzyme composed of 14 subunits. The complex is composed of a catalytic core of 3 subunits MT-CO1, MT-CO2 and MT-CO3, encoded in the mitochondrial DNA, and 11 supernumerary subunits COX4I, COX5A, COX5B, COX6A, COX6B, COX6C, COX7A, COX7B, COX7C, COX8 and NDUFA4, which are encoded in the nuclear genome. The complex exists as a monomer or a dimer and forms supercomplexes (SCs) in the inner mitochondrial membrane with NADH-ubiquinone oxidoreductase (complex I, CI) and ubiquinol-cytochrome c oxidoreductase (cytochrome b-c1 complex, complex III, CIII), resulting in different assemblies (supercomplex SCI(1)III(2)IV(1) and megacomplex MCI(2)III(2)IV(2)). Found in a complex with TMEM177, COA6, COX18, COX20, SCO1 and SCO2. Interacts with TMEM177 in a COX20-dependent manner. Interacts with COX20. Interacts with COX16. Cu cation serves as cofactor.

It localises to the mitochondrion inner membrane. It carries out the reaction 4 Fe(II)-[cytochrome c] + O2 + 8 H(+)(in) = 4 Fe(III)-[cytochrome c] + 2 H2O + 4 H(+)(out). Functionally, component of the cytochrome c oxidase, the last enzyme in the mitochondrial electron transport chain which drives oxidative phosphorylation. The respiratory chain contains 3 multisubunit complexes succinate dehydrogenase (complex II, CII), ubiquinol-cytochrome c oxidoreductase (cytochrome b-c1 complex, complex III, CIII) and cytochrome c oxidase (complex IV, CIV), that cooperate to transfer electrons derived from NADH and succinate to molecular oxygen, creating an electrochemical gradient over the inner membrane that drives transmembrane transport and the ATP synthase. Cytochrome c oxidase is the component of the respiratory chain that catalyzes the reduction of oxygen to water. Electrons originating from reduced cytochrome c in the intermembrane space (IMS) are transferred via the dinuclear copper A center (CU(A)) of subunit 2 and heme A of subunit 1 to the active site in subunit 1, a binuclear center (BNC) formed by heme A3 and copper B (CU(B)). The BNC reduces molecular oxygen to 2 water molecules using 4 electrons from cytochrome c in the IMS and 4 protons from the mitochondrial matrix. This is Cytochrome c oxidase subunit 2 (MT-CO2) from Macaca mulatta (Rhesus macaque).